Consider the following 157-residue polypeptide: Transcription factor HES-2 (157 aa).

Positions 13–70 constitute a bHLH domain; that stretch reads LRKNLKPLLEKRRRARINESLSQLKGLVLPLLGAETSRSSKLEKADILEMTVRFLQEQ. One can recognise an Orange domain in the interval 86–119; it reads YLEGYRACLARLARVLPACSVLEPAVSARLLEHL. The segment at 124–157 is disordered; that stretch reads VSDDSPSLTLPPAPAPAPSPPVPPPGSSGLWRPW. Residues 132–149 are compositionally biased toward pro residues; the sequence is TLPPAPAPAPSPPVPPPG. The WRPW motif motif lies at 154 to 157; that stretch reads WRPW.

In terms of assembly, transcription repression requires formation of a complex with a corepressor protein of the Groucho/TLE family.

It localises to the nucleus. Transcriptional repressor of genes that require a bHLH protein for their transcription. The sequence is that of Transcription factor HES-2 (Hes2) from Mus musculus (Mouse).